A 293-amino-acid polypeptide reads, in one-letter code: 33 kDa chaperonin (293 aa).

2 cysteine pairs are disulfide-bonded: C239-C241 and C272-C275.

The protein belongs to the HSP33 family. Post-translationally, under oxidizing conditions two disulfide bonds are formed involving the reactive cysteines. Under reducing conditions zinc is bound to the reactive cysteines and the protein is inactive.

The protein localises to the cytoplasm. In terms of biological role, redox regulated molecular chaperone. Protects both thermally unfolding and oxidatively damaged proteins from irreversible aggregation. Plays an important role in the bacterial defense system toward oxidative stress. The protein is 33 kDa chaperonin of Limosilactobacillus fermentum (strain NBRC 3956 / LMG 18251) (Lactobacillus fermentum).